A 324-amino-acid polypeptide reads, in one-letter code: Protein translocase subunit SecF (324 aa).

A run of 6 helical transmembrane segments spans residues 16–36 (FFWAAPVTFGFSVFLMAASLV), 145–165 (LIRSAILAVAAACAGIAVYIW), 174–194 (LGSVAALIHDVLVTIGVFALF), 201–221 (TTVAALLTVLGYSINDTVVVF), 247–269 (TLSRTIMTLMTTLIALVSLLVFG), and 276–295 (FVFAITFGVVIGTYSSVYMA).

Belongs to the SecD/SecF family. SecF subfamily. As to quaternary structure, forms a complex with SecD. Part of the essential Sec protein translocation apparatus which comprises SecA, SecYEG and auxiliary proteins SecDF-YajC and YidC.

It is found in the cell inner membrane. In terms of biological role, part of the Sec protein translocase complex. Interacts with the SecYEG preprotein conducting channel. SecDF uses the proton motive force (PMF) to complete protein translocation after the ATP-dependent function of SecA. The protein is Protein translocase subunit SecF of Cereibacter sphaeroides (strain ATCC 17023 / DSM 158 / JCM 6121 / CCUG 31486 / LMG 2827 / NBRC 12203 / NCIMB 8253 / ATH 2.4.1.) (Rhodobacter sphaeroides).